An 82-amino-acid chain; its full sequence is Turripeptide IX-23 (82 aa).

The signal sequence occupies residues 1 to 23 (MMAKLMITVMMVLLLSLQQGADG). Positions 24 to 50 (RSERWRKNQMAASSIMRNLITARIDPP) are excised as a propeptide. 3 cysteine pairs are disulfide-bonded: Cys53–Cys68, Cys58–Cys72, and Cys64–Cys79.

This sequence belongs to the Pg turripeptide superfamily. In terms of tissue distribution, expressed by the venom duct.

The protein resides in the secreted. This chain is Turripeptide IX-23, found in Gemmula speciosa (Splendid gem-turris).